The chain runs to 511 residues: Mannosyl-oligosaccharide alpha-1,2-mannosidase (511 aa).

A signal peptide spans 1–35; the sequence is MRLPVSFPLTVLSLLGSTIAHPYGETEAVLRSEPK. Asn182 carries an N-linked (GlcNAc...) asparagine glycan. An intrachain disulfide couples Cys332 to Cys361. A glycan (N-linked (GlcNAc...) asparagine) is linked at Asn366. The Proton donor role is filled by Asp375. A glycan (N-linked (GlcNAc...) asparagine) is linked at Asn438. Thr501 contacts Ca(2+).

This sequence belongs to the glycosyl hydrolase 47 family. In terms of assembly, homodimer. Requires Ca(2+) as cofactor.

The protein localises to the secreted. It carries out the reaction N(4)-(alpha-D-Man-(1-&gt;2)-alpha-D-Man-(1-&gt;2)-alpha-D-Man-(1-&gt;3)-[alpha-D-Man-(1-&gt;2)-alpha-D-Man-(1-&gt;3)-[alpha-D-Man-(1-&gt;2)-alpha-D-Man-(1-&gt;6)]-alpha-D-Man-(1-&gt;6)]-beta-D-Man-(1-&gt;4)-beta-D-GlcNAc-(1-&gt;4)-beta-D-GlcNAc)-L-asparaginyl-[protein] (N-glucan mannose isomer 9A1,2,3B1,2,3) + 4 H2O = N(4)-(alpha-D-Man-(1-&gt;3)-[alpha-D-Man-(1-&gt;3)-[alpha-D-Man-(1-&gt;6)]-alpha-D-Man-(1-&gt;6)]-beta-D-Man-(1-&gt;4)-beta-D-GlcNAc-(1-&gt;4)-beta-D-GlcNAc)-L-asparaginyl-[protein] (N-glucan mannose isomer 5A1,2) + 4 beta-D-mannose. The enzyme catalyses N(4)-(alpha-D-Man-(1-&gt;2)-alpha-D-Man-(1-&gt;2)-alpha-D-Man-(1-&gt;3)-[alpha-D-Man-(1-&gt;3)-[alpha-D-Man-(1-&gt;2)-alpha-D-Man-(1-&gt;6)]-alpha-D-Man-(1-&gt;6)]-beta-D-Man-(1-&gt;4)-beta-D-GlcNAc-(1-&gt;4)-beta-D-GlcNAc)-L-asparaginyl-[protein] (N-glucan mannose isomer 8A1,2,3B1,3) + 3 H2O = N(4)-(alpha-D-Man-(1-&gt;3)-[alpha-D-Man-(1-&gt;3)-[alpha-D-Man-(1-&gt;6)]-alpha-D-Man-(1-&gt;6)]-beta-D-Man-(1-&gt;4)-beta-D-GlcNAc-(1-&gt;4)-beta-D-GlcNAc)-L-asparaginyl-[protein] (N-glucan mannose isomer 5A1,2) + 3 beta-D-mannose. The protein operates within protein modification; protein glycosylation. Functionally, involved in the maturation of Asn-linked oligosaccharides. Progressively trim alpha-1,2-linked mannose residues from Man(9)GlcNAc(2) to produce Man(5)GlcNAc(2). In Penicillium citrinum, this protein is Mannosyl-oligosaccharide alpha-1,2-mannosidase (MSDC).